The chain runs to 195 residues: Dephospho-CoA kinase (195 aa).

In terms of domain architecture, DPCK spans 3-195 (IIGLTGSIAM…LFVIKSLLKN (193 aa)). 11–16 (AMGKST) contributes to the ATP binding site.

It belongs to the CoaE family.

It is found in the cytoplasm. The catalysed reaction is 3'-dephospho-CoA + ATP = ADP + CoA + H(+). Its pathway is cofactor biosynthesis; coenzyme A biosynthesis; CoA from (R)-pantothenate: step 5/5. Its function is as follows. Catalyzes the phosphorylation of the 3'-hydroxyl group of dephosphocoenzyme A to form coenzyme A. This is Dephospho-CoA kinase from Bartonella henselae (strain ATCC 49882 / DSM 28221 / CCUG 30454 / Houston 1) (Rochalimaea henselae).